We begin with the raw amino-acid sequence, 1333 residues long: DNA-directed RNA polymerase subunit beta' (1333 aa).

Positions 60, 62, 75, and 78 each coordinate Zn(2+). Residues Asp535, Asp537, and Asp539 each contribute to the Mg(2+) site. Zn(2+) is bound by residues Cys901, Cys983, Cys990, and Cys993.

It belongs to the RNA polymerase beta' chain family. As to quaternary structure, the RNAP catalytic core consists of 2 alpha, 1 beta, 1 beta' and 1 omega subunit. When a sigma factor is associated with the core the holoenzyme is formed, which can initiate transcription. Requires Mg(2+) as cofactor. Zn(2+) is required as a cofactor.

It catalyses the reaction RNA(n) + a ribonucleoside 5'-triphosphate = RNA(n+1) + diphosphate. Its function is as follows. DNA-dependent RNA polymerase catalyzes the transcription of DNA into RNA using the four ribonucleoside triphosphates as substrates. This Corynebacterium efficiens (strain DSM 44549 / YS-314 / AJ 12310 / JCM 11189 / NBRC 100395) protein is DNA-directed RNA polymerase subunit beta'.